A 977-amino-acid polypeptide reads, in one-letter code: Kinesin-like protein KIN-7L, chloroplastic (977 aa).

Residues 1 to 12 (MGSKQVSKTRNG) show a composition bias toward polar residues. The disordered stretch occupies residues 1–66 (MGSKQVSKTR…PPKPLQSKEN (66 aa)). 2 stretches are compositionally biased toward low complexity: residues 22–31 (SSASSTTSSS) and 38–54 (SVDS…RSKP). The Kinesin motor domain occupies 66 to 385 (NVTVTVRFRP…LKFAHRAKHI (320 aa)). ATP is bound at residue 146–153 (GVTSSGKT). Residues 386-471 (EIQAAQNKII…LTKLILVSNK (86 aa)) are a coiled coil. A disordered region spans residues 549–589 (DSSLGGSSLSDKSSAVKSNSTPSTPQGEGSDFHTESRLSEG). Residues 551-561 (SLGGSSLSDKS) show a composition bias toward low complexity. The span at 563-575 (AVKSNSTPSTPQG) shows a compositional bias: polar residues. Coiled coils occupy residues 626–688 (MEIL…GKQI) and 732–942 (IQEQ…LENE). The segment covering 864 to 876 (SSVTTPQGKTGNL) has biased composition (polar residues). Disordered regions lie at residues 864-891 (SSVT…KEQE) and 958-977 (AANS…HFGT). Residues 879–891 (GRRESVSKRKEQE) are compositionally biased toward basic and acidic residues. Positions 958–967 (AANSGLSDSV) are enriched in polar residues. The span at 968 to 977 (SETRIEHFGT) shows a compositional bias: basic and acidic residues.

The protein belongs to the TRAFAC class myosin-kinesin ATPase superfamily. Kinesin family. KIN-7 subfamily.

It localises to the plastid. The protein resides in the chloroplast. The sequence is that of Kinesin-like protein KIN-7L, chloroplastic from Arabidopsis thaliana (Mouse-ear cress).